The following is a 193-amino-acid chain: Rho-related GTP-binding protein RhoA-B (193 aa).

Residues 12–19, 30–37, 59–63, 117–120, and 160–162 contribute to the GTP site; these read GDGACGKT, FPEVYVPT, DTAGQ, NKKD, and SAK. Tyr-34 carries (Microbial infection) O-linked (GlcNAc) tyrosine; by Yersinia Afp18 glycosylation. The residue at position 190 (Cys-190) is a Cysteine methyl ester. Cys-190 carries S-geranylgeranyl cysteine lipidation. Residues 191–193 constitute a propeptide, removed in mature form; the sequence is CLL.

This sequence belongs to the small GTPase superfamily. Rho family. Post-translationally, (Microbial infection) Glycosylated at Tyr-34 by Yersinia ruckeri toxin Afp18. Mono-O-GlcNAcylation by Afp18 inhibits RhoA activation by guanine nucleotide exchange factors and blocks RhoA signaling.

The protein resides in the cell membrane. Regulates a signal transduction pathway linking plasma membrane receptors to the assembly of focal adhesions and actin stress fibers. This Danio rerio (Zebrafish) protein is Rho-related GTP-binding protein RhoA-B.